We begin with the raw amino-acid sequence, 516 residues long: D-alanine--D-alanyl carrier protein ligase (516 aa).

156–157 (TS) is a binding site for ATP. Residue Asp-203 coordinates D-alanine. 298 to 303 (NAYGPT) lines the ATP pocket. Residue Val-307 coordinates D-alanine. Residues Asp-389, 401–404 (YGGR), and Lys-503 contribute to the ATP site. Lys-503 contributes to the D-alanine binding site.

It belongs to the ATP-dependent AMP-binding enzyme family. DltA subfamily.

It is found in the cytoplasm. It catalyses the reaction holo-[D-alanyl-carrier protein] + D-alanine + ATP = D-alanyl-[D-alanyl-carrier protein] + AMP + diphosphate. It participates in cell wall biogenesis; lipoteichoic acid biosynthesis. In terms of biological role, catalyzes the first step in the D-alanylation of lipoteichoic acid (LTA), the activation of D-alanine and its transfer onto the D-alanyl carrier protein (Dcp) DltC. In an ATP-dependent two-step reaction, forms a high energy D-alanyl-AMP intermediate, followed by transfer of the D-alanyl residue as a thiol ester to the phosphopantheinyl prosthetic group of the Dcp. D-alanylation of LTA plays an important role in modulating the properties of the cell wall in Gram-positive bacteria, influencing the net charge of the cell wall. The chain is D-alanine--D-alanyl carrier protein ligase from Streptococcus pneumoniae serotype 4 (strain ATCC BAA-334 / TIGR4).